The sequence spans 68 residues: Protein SlyX homolog (68 aa).

It belongs to the SlyX family.

This is Protein SlyX homolog from Pseudomonas putida (strain GB-1).